A 242-amino-acid polypeptide reads, in one-letter code: GLIPR1-like protein 1 (242 aa).

Positions 1–22 are cleaved as a signal peptide; sequence MALKNKFSCLWILGLCLVATTS. The SCP domain maps to 39-171; it reads EAHNEWRGKV…ASTAIFVCNY (133 aa). N-linked (GlcNAc...) asparagine glycosylation occurs at N119. G221 carries the GPI-anchor amidated glycine lipid modification. Positions 222-242 are cleaved as a propeptide — removed in mature form; it reads RAPQQTAFNPFSLGFLLLRIF.

The protein belongs to the CRISP family. Part of a oolemmal binding multimeric complex (IZUMO1 complex) composed at least of IZUMO1 and GLIPR1L1; the complex assemblage is influenced by the maturation status of the male germ cell. Interacts with IZUMO1. Post-translationally, N-glycosylated. N-glycosylation decreases during the transit in the caput. Highly expressed in testis.

The protein localises to the cytoplasmic vesicle. It is found in the secretory vesicle. The protein resides in the acrosome. It localises to the cell membrane. Its subcellular location is the membrane raft. The protein localises to the secreted. In terms of biological role, required for optimal fertilization at the stage of sperm-oocyte fusion, plays a role in optimizing acrosome function, the translocation of IZUMO1 during the acrosome reaction and the fertilization process. Component of epididymosomes, one type of membranous microvesicules which mediate the transfer of lipids and proteins to spermatozoa plasma membrane during epididymal maturation. Also component of the CD9-positive microvesicules found in the cauda region. The protein is GLIPR1-like protein 1 (GLIPR1L1) of Homo sapiens (Human).